The sequence spans 94 residues: Alpha-galactosyl-binding lectin (94 aa).

Homodimer. Post-translationally, contains three disulfide bonds.

Functionally, alpha-galactosyl-binding lectin with preference for galactose-alpha-1,4-galactose. In Lyophyllum decastes (Fried chicken mushroom), this protein is Alpha-galactosyl-binding lectin.